The following is a 270-amino-acid chain: Tryptophan synthase alpha chain (270 aa).

Active-site proton acceptor residues include Glu50 and Asp61.

Belongs to the TrpA family. Tetramer of two alpha and two beta chains.

The catalysed reaction is (1S,2R)-1-C-(indol-3-yl)glycerol 3-phosphate + L-serine = D-glyceraldehyde 3-phosphate + L-tryptophan + H2O. It functions in the pathway amino-acid biosynthesis; L-tryptophan biosynthesis; L-tryptophan from chorismate: step 5/5. Functionally, the alpha subunit is responsible for the aldol cleavage of indoleglycerol phosphate to indole and glyceraldehyde 3-phosphate. This is Tryptophan synthase alpha chain from Chlorobium luteolum (strain DSM 273 / BCRC 81028 / 2530) (Pelodictyon luteolum).